The primary structure comprises 336 residues: Methionine synthase (336 aa).

Residues His210, Cys212, Glu234, and Cys294 each contribute to the Zn(2+) site.

This sequence belongs to the archaeal MetE family. The cofactor is Zn(2+).

It functions in the pathway amino-acid biosynthesis; L-methionine biosynthesis via de novo pathway. In terms of biological role, catalyzes the transfer of a methyl group to L-homocysteine resulting in methionine formation. The physiological methyl donor is unknown. In Thermococcus kodakarensis (strain ATCC BAA-918 / JCM 12380 / KOD1) (Pyrococcus kodakaraensis (strain KOD1)), this protein is Methionine synthase.